The primary structure comprises 518 residues: PTS system mannitol-specific EIICB component (518 aa).

Topologically, residues 1–31 (MDTMSNSQQNKGIGRKVQAFGSFLSSMIMPN) are cytoplasmic. The PTS EIIC type-2 domain maps to 20–352 (FGSFLSSMIM…LKFTKDPKQD (333 aa)). The helical transmembrane segment at 32–53 (IGAFIAWGFIAAIFIDNGWFPN) threads the bilayer. The Extracellular segment spans residues 54-57 (KDLA). The chain crosses the membrane as a helical span at residues 58–78 (QLAGPMITYLIPLLIAFSGGR). The Cytoplasmic segment spans residues 79-142 (LIHDLRGGII…QGFEMLFNNF (64 aa)). The helical transmembrane segment at 143-164 (SAGILGFIMTIFGFEVLAPIMK) threads the bilayer. The Extracellular portion of the chain corresponds to 165–173 (FIMHILSVG). The helical transmembrane segment at 174 to 194 (VEALVHAHLLPLVSILVEPAK) threads the bilayer. Residues 195 to 281 (IVFLNNAINH…VLMRPLLFVS (87 aa)) are Cytoplasmic-facing. Residues 282–301 (VILGGMTGVATYSLLDFGFK) form a helical membrane-spanning segment. At 302–321 (TPASPGSIIVYAINAPKGEF) the chain is on the extracellular side. The chain crosses the membrane as a helical span at residues 322–343 (LHMLTGVVLAALVSFVVSALIL). Residues 344–518 (KFTKDPKQDL…LINNLKEDQD (175 aa)) are Cytoplasmic-facing. A disordered region spans residues 369-406 (SVASKLSAKDDNKAADNKTAETTTATAASNKAEDKDSD). Positions 375 to 387 (SAKDDNKAADNKT) are enriched in basic and acidic residues. Over residues 388 to 398 (AETTTATAASN) the composition is skewed to low complexity. The PTS EIIB type-2 domain occupies 426–518 (DHVIFACDAG…LINNLKEDQD (93 aa)). Residue cysteine 432 is the Phosphocysteine intermediate of the active site. A Phosphocysteine; by EIIA modification is found at cysteine 432.

In terms of assembly, homodimer.

The protein resides in the cell membrane. It catalyses the reaction D-mannitol(out) + N(pros)-phospho-L-histidyl-[protein] = D-mannitol 1-phosphate(in) + L-histidyl-[protein]. Its function is as follows. The phosphoenolpyruvate-dependent sugar phosphotransferase system (sugar PTS), a major carbohydrate active transport system, catalyzes the phosphorylation of incoming sugar substrates concomitantly with their translocation across the cell membrane. The enzyme II CmtAB PTS system is involved in D-mannitol transport. The sequence is that of PTS system mannitol-specific EIICB component from Staphylococcus carnosus.